A 262-amino-acid chain; its full sequence is Thiazole synthase (262 aa).

Lysine 96 functions as the Schiff-base intermediate with DXP in the catalytic mechanism. 1-deoxy-D-xylulose 5-phosphate-binding positions include glycine 157, 184–185, and 206–207; these read AG and NT.

It belongs to the ThiG family. As to quaternary structure, homotetramer. Forms heterodimers with either ThiH or ThiS.

Its subcellular location is the cytoplasm. The catalysed reaction is [ThiS sulfur-carrier protein]-C-terminal-Gly-aminoethanethioate + 2-iminoacetate + 1-deoxy-D-xylulose 5-phosphate = [ThiS sulfur-carrier protein]-C-terminal Gly-Gly + 2-[(2R,5Z)-2-carboxy-4-methylthiazol-5(2H)-ylidene]ethyl phosphate + 2 H2O + H(+). It participates in cofactor biosynthesis; thiamine diphosphate biosynthesis. Its function is as follows. Catalyzes the rearrangement of 1-deoxy-D-xylulose 5-phosphate (DXP) to produce the thiazole phosphate moiety of thiamine. Sulfur is provided by the thiocarboxylate moiety of the carrier protein ThiS. In vitro, sulfur can be provided by H(2)S. This Legionella pneumophila (strain Corby) protein is Thiazole synthase.